We begin with the raw amino-acid sequence, 355 residues long: S-adenosylmethionine:tRNA ribosyltransferase-isomerase (355 aa).

Belongs to the QueA family. In terms of assembly, monomer.

It localises to the cytoplasm. The catalysed reaction is 7-aminomethyl-7-carbaguanosine(34) in tRNA + S-adenosyl-L-methionine = epoxyqueuosine(34) in tRNA + adenine + L-methionine + 2 H(+). The protein operates within tRNA modification; tRNA-queuosine biosynthesis. Functionally, transfers and isomerizes the ribose moiety from AdoMet to the 7-aminomethyl group of 7-deazaguanine (preQ1-tRNA) to give epoxyqueuosine (oQ-tRNA). This is S-adenosylmethionine:tRNA ribosyltransferase-isomerase from Burkholderia cenocepacia (strain ATCC BAA-245 / DSM 16553 / LMG 16656 / NCTC 13227 / J2315 / CF5610) (Burkholderia cepacia (strain J2315)).